Consider the following 335-residue polypeptide: 3-isopropylmalate dehydrogenase (335 aa).

Positions 87, 97, 121, and 211 each coordinate substrate. Aspartate 211, aspartate 235, and aspartate 239 together coordinate Mg(2+). Residue 271–283 (GSAPDIAGQSKAD) participates in NAD(+) binding.

This sequence belongs to the isocitrate and isopropylmalate dehydrogenases family. LeuB type 2 subfamily. Homodimer. Mg(2+) serves as cofactor. Mn(2+) is required as a cofactor.

Its subcellular location is the cytoplasm. The catalysed reaction is (2R,3S)-3-isopropylmalate + NAD(+) = 4-methyl-2-oxopentanoate + CO2 + NADH. Its pathway is amino-acid biosynthesis; L-leucine biosynthesis; L-leucine from 3-methyl-2-oxobutanoate: step 3/4. In terms of biological role, catalyzes the oxidation of 3-carboxy-2-hydroxy-4-methylpentanoate (3-isopropylmalate) to 3-carboxy-4-methyl-2-oxopentanoate. The product decarboxylates to 4-methyl-2 oxopentanoate. This is 3-isopropylmalate dehydrogenase from Nocardia farcinica (strain IFM 10152).